Here is a 179-residue protein sequence, read N- to C-terminus: 3-hydroxyanthranilate 3,4-dioxygenase (179 aa).

Arginine 47 lines the O2 pocket. Histidine 51, glutamate 57, and histidine 96 together coordinate Fe cation. Substrate is bound at residue glutamate 57. Substrate contacts are provided by arginine 100 and glutamate 110. 4 residues coordinate Fe cation: cysteine 125, cysteine 128, cysteine 162, and cysteine 165.

Belongs to the 3-HAO family. Fe(2+) serves as cofactor.

It carries out the reaction 3-hydroxyanthranilate + O2 = (2Z,4Z)-2-amino-3-carboxymuconate 6-semialdehyde. The protein operates within cofactor biosynthesis; NAD(+) biosynthesis; quinolinate from L-kynurenine: step 3/3. Its function is as follows. Catalyzes the oxidative ring opening of 3-hydroxyanthranilate to 2-amino-3-carboxymuconate semialdehyde, which spontaneously cyclizes to quinolinate. This Bacillus cereus (strain ATCC 10987 / NRS 248) protein is 3-hydroxyanthranilate 3,4-dioxygenase.